A 452-amino-acid polypeptide reads, in one-letter code: Phosphoglucosamine mutase (452 aa).

The Phosphoserine intermediate role is filled by serine 88. Mg(2+) contacts are provided by serine 88, aspartate 234, aspartate 236, and aspartate 238. Serine 88 carries the post-translational modification Phosphoserine.

The protein belongs to the phosphohexose mutase family. Mg(2+) serves as cofactor. Post-translationally, activated by phosphorylation.

It carries out the reaction alpha-D-glucosamine 1-phosphate = D-glucosamine 6-phosphate. Functionally, catalyzes the conversion of glucosamine-6-phosphate to glucosamine-1-phosphate. The polypeptide is Phosphoglucosamine mutase (Methanococcus aeolicus (strain ATCC BAA-1280 / DSM 17508 / OCM 812 / Nankai-3)).